The primary structure comprises 495 residues: Probable staphylococcal-like nuclease CAN4 (495 aa).

Glycine 2 carries N-myristoyl glycine lipidation. A lipid anchor (S-palmitoyl cysteine) is attached at cysteine 11. Disordered regions lie at residues 45–68 (DLQV…RPAL) and 81–101 (LQVP…PPRP). Residues 50–66 (LSPPPPSTRQQQPPPRP) show a composition bias toward pro residues. The TNase-like domain maps to 297 to 470 (KTLPVNAKCI…RDARQGLWAY (174 aa)). Residue aspartate 310 coordinates Ca(2+). Arginine 377 is an active-site residue. Aspartate 382 is a binding site for Ca(2+). Catalysis depends on residues glutamate 385 and arginine 419.

The protein belongs to the thermonuclease family. Requires Ca(2+) as cofactor.

The protein localises to the cell membrane. In terms of biological role, enzyme that catalyzes the hydrolysis of both DNA and RNA at the 5' position of the phosphodiester bond. The protein is Probable staphylococcal-like nuclease CAN4 of Oryza sativa subsp. japonica (Rice).